The following is a 420-amino-acid chain: Histidine--tRNA ligase (420 aa).

Belongs to the class-II aminoacyl-tRNA synthetase family. Homodimer.

The protein localises to the cytoplasm. The catalysed reaction is tRNA(His) + L-histidine + ATP = L-histidyl-tRNA(His) + AMP + diphosphate + H(+). This is Histidine--tRNA ligase from Desulforudis audaxviator (strain MP104C).